The following is a 266-amino-acid chain: Short-chain dehydrogenase/reductase AacuF (266 aa).

Residues Leu13, Asp57, and Asn85 each coordinate NADP(+). Residues Ser145 and Tyr164 each act as proton donor in the active site. Residues Tyr164, Lys168, and Val198 each contribute to the NADP(+) site. Catalysis depends on Lys168, which acts as the Lowers pKa of active site Tyr.

It belongs to the short-chain dehydrogenases/reductases (SDR) family.

It functions in the pathway secondary metabolite biosynthesis. Functionally, short-chain dehydrogenase/reductase; part of the gene cluster that mediates the biosynthesis of the tetrahydroxanthone dimer secalonic acid D. The pathway begins with the synthesis of atrochrysone thioester by the polyketide synthase AacuL. The atrochrysone carboxyl ACP thioesterase AacuM then breaks the thioester bond and releases the atrochrysone carboxylic acid from AacuL. Atrochrysone carboxylic acid is decarboxylated by the decarboxylase AacuI, and oxidized by the anthrone oxygenase AacuG to yield emodin. Emodin is then reduced to emodin hydroquinone by a yet unidentified oxidoreductase. A-ring reduction by the short chain dehydrogenase AacuN, dehydration by the scytalone dehydratase-like protein AacuK and probable spontaneous re-oxidation, results in overall deoxygenation to chrysophanol. Baeyer-Villiger oxidation by the Baeyer-Villiger monooxygenase (BVMO) AacuH then yields monodictyphenone. Monodictyphenone is transformed into compounds with the tetrahydroxanthone skeleton via methylesterification by the methyltransferase AacuQ, followed by the action of the flavin-dependent monooxygenase AacuC, the isomerase AacuP, and the short chain dehydrogenase/reductase AacuF or AacuD. AacuF and AacuD should accept the same compound as a substrate but perform the ketoreduction with a different stereoselectivity, thus yielding blennolides B and A, respectively. In the final step of the biosynthesis, the cytochrome P450 monooxygenase AacuE accepts blennolide B and/or blennolide A to conduct the dimerization reaction to furnish the tetrahydroxanthone dimers, secalonic acids D, B, and F. The chain is Short-chain dehydrogenase/reductase AacuF from Aspergillus aculeatus (strain ATCC 16872 / CBS 172.66 / WB 5094).